A 448-amino-acid chain; its full sequence is Allantoinase (448 aa).

The Zn(2+) site is built by His60, His62, Lys147, His183, His239, and Asp312. The residue at position 147 (Lys147) is an N6-carboxylysine.

It belongs to the metallo-dependent hydrolases superfamily. Allantoinase family. As to quaternary structure, homotetramer. Zn(2+) is required as a cofactor. In terms of processing, carboxylation allows a single lysine to coordinate two zinc ions.

The catalysed reaction is (S)-allantoin + H2O = allantoate + H(+). The protein operates within nitrogen metabolism; (S)-allantoin degradation; allantoate from (S)-allantoin: step 1/1. Functionally, catalyzes the conversion of allantoin (5-ureidohydantoin) to allantoic acid by hydrolytic cleavage of the five-member hydantoin ring. This chain is Allantoinase, found in Deinococcus radiodurans (strain ATCC 13939 / DSM 20539 / JCM 16871 / CCUG 27074 / LMG 4051 / NBRC 15346 / NCIMB 9279 / VKM B-1422 / R1).